We begin with the raw amino-acid sequence, 770 residues long: Probable methyltransferase PMT24 (770 aa).

Over 1-17 (MAMGKYSRVDGKKSSGY) the chain is Cytoplasmic. Residues 18-38 (GLTITIVLIVSLCLVGAWMFM) form a helical; Signal-anchor for type II membrane protein membrane-spanning segment. The Lumenal segment spans residues 39-770 (SSWSAPTESI…EAETIQSAIA (732 aa)). Basic and acidic residues-rich tracts occupy residues 54 to 81 (ERTK…FPDE) and 93 to 164 (NEEK…KSED). The segment at 54–223 (ERTKDVDTTK…STGSGAWSTQ (170 aa)) is disordered. N-linked (GlcNAc...) asparagine glycans are attached at residues Asn160 and Asn166. A compositionally biased stretch (polar residues) spans 212–223 (ESSTGSGAWSTQ). N-linked (GlcNAc...) asparagine glycosylation is found at Asn244 and Asn363.

Belongs to the methyltransferase superfamily.

It localises to the golgi apparatus membrane. The chain is Probable methyltransferase PMT24 from Arabidopsis thaliana (Mouse-ear cress).